The primary structure comprises 535 residues: Probable cytochrome P450 12b2, mitochondrial (535 aa).

Cys-479 serves as a coordination point for heme.

The protein belongs to the cytochrome P450 family. Requires heme as cofactor.

It localises to the mitochondrion membrane. This chain is Probable cytochrome P450 12b2, mitochondrial (Cyp12b2), found in Drosophila melanogaster (Fruit fly).